Reading from the N-terminus, the 208-residue chain is Uracil phosphoribosyltransferase (208 aa).

5-phospho-alpha-D-ribose 1-diphosphate-binding positions include R78, R103, and 130-138 (DPMLAIGGS). Residues I193 and 198–200 (GDA) each bind uracil. Residue D199 participates in 5-phospho-alpha-D-ribose 1-diphosphate binding.

Belongs to the UPRTase family. Mg(2+) is required as a cofactor.

It carries out the reaction UMP + diphosphate = 5-phospho-alpha-D-ribose 1-diphosphate + uracil. It functions in the pathway pyrimidine metabolism; UMP biosynthesis via salvage pathway; UMP from uracil: step 1/1. Its activity is regulated as follows. Allosterically activated by GTP. Catalyzes the conversion of uracil and 5-phospho-alpha-D-ribose 1-diphosphate (PRPP) to UMP and diphosphate. The polypeptide is Uracil phosphoribosyltransferase (Vibrio cholerae serotype O1 (strain ATCC 39315 / El Tor Inaba N16961)).